Reading from the N-terminus, the 379-residue chain is Chaperone protein DnaJ (379 aa).

The J domain occupies 5-69 (EYYERLGVDK…QKRAAYDQYG (65 aa)). A CR-type zinc finger spans residues 141-223 (GVEKQVKYNR…CHGSGHEKVA (83 aa)). Residues Cys-154, Cys-157, Cys-171, Cys-174, Cys-197, Cys-200, Cys-211, and Cys-214 each contribute to the Zn(2+) site. 4 CXXCXGXG motif repeats span residues 154–161 (CHTCGGSG), 171–178 (CHKCGGRG), 197–204 (CDVCNGTG), and 211–218 (CETCHGSG).

The protein belongs to the DnaJ family. In terms of assembly, homodimer. Requires Zn(2+) as cofactor.

It localises to the cytoplasm. In terms of biological role, participates actively in the response to hyperosmotic and heat shock by preventing the aggregation of stress-denatured proteins and by disaggregating proteins, also in an autonomous, DnaK-independent fashion. Unfolded proteins bind initially to DnaJ; upon interaction with the DnaJ-bound protein, DnaK hydrolyzes its bound ATP, resulting in the formation of a stable complex. GrpE releases ADP from DnaK; ATP binding to DnaK triggers the release of the substrate protein, thus completing the reaction cycle. Several rounds of ATP-dependent interactions between DnaJ, DnaK and GrpE are required for fully efficient folding. Also involved, together with DnaK and GrpE, in the DNA replication of plasmids through activation of initiation proteins. This chain is Chaperone protein DnaJ, found in Lactococcus lactis subsp. lactis (strain IL1403) (Streptococcus lactis).